Consider the following 257-residue polypeptide: GTP cyclohydrolase FolE2 (257 aa).

Belongs to the GTP cyclohydrolase IV family.

The catalysed reaction is GTP + H2O = 7,8-dihydroneopterin 3'-triphosphate + formate + H(+). The protein operates within cofactor biosynthesis; 7,8-dihydroneopterin triphosphate biosynthesis; 7,8-dihydroneopterin triphosphate from GTP: step 1/1. Converts GTP to 7,8-dihydroneopterin triphosphate. This Syntrophobacter fumaroxidans (strain DSM 10017 / MPOB) protein is GTP cyclohydrolase FolE2.